The chain runs to 147 residues: Large ribosomal subunit protein uL15 (147 aa).

The tract at residues 1 to 42 (MTIKLHHLRPAPGAKTDKTRVGRGEGSKGKTAGRGTKGTKAR) is disordered. Basic and acidic residues predominate over residues 15–28 (KTDKTRVGRGEGSK).

It belongs to the universal ribosomal protein uL15 family. As to quaternary structure, part of the 50S ribosomal subunit.

Functionally, binds to the 23S rRNA. This is Large ribosomal subunit protein uL15 from Nocardia farcinica (strain IFM 10152).